The chain runs to 274 residues: Thiamine kinase (274 aa).

It belongs to the thiamine kinase family.

It catalyses the reaction thiamine + ATP = thiamine phosphate + ADP + H(+). The protein operates within cofactor biosynthesis; thiamine diphosphate biosynthesis; thiamine phosphate from thiamine: step 1/1. Functionally, catalyzes the ATP-dependent phosphorylation of thiamine to thiamine phosphate. Is involved in thiamine salvage. The protein is Thiamine kinase of Escherichia coli O157:H7 (strain EC4115 / EHEC).